Here is a 155-residue protein sequence, read N- to C-terminus: Small ribosomal subunit protein uS7 (155 aa).

Belongs to the universal ribosomal protein uS7 family. In terms of assembly, part of the 30S ribosomal subunit. Contacts proteins S9 and S11.

In terms of biological role, one of the primary rRNA binding proteins, it binds directly to 16S rRNA where it nucleates assembly of the head domain of the 30S subunit. Is located at the subunit interface close to the decoding center, probably blocks exit of the E-site tRNA. The protein is Small ribosomal subunit protein uS7 of Mycoplasmoides gallisepticum (strain R(low / passage 15 / clone 2)) (Mycoplasma gallisepticum).